Here is a 95-residue protein sequence, read N- to C-terminus: MKIRPLNDRLLVKRLAEEEKTAGGIIIPDSAKEKPAEGQVVAVGPGKVSDSGERVALQVKEGDLVLFSKYGGTDVKLDGEDFLIMREDDILGIME.

The protein belongs to the GroES chaperonin family. In terms of assembly, heptamer of 7 subunits arranged in a ring. Interacts with the chaperonin GroEL.

It localises to the cytoplasm. Functionally, together with the chaperonin GroEL, plays an essential role in assisting protein folding. The GroEL-GroES system forms a nano-cage that allows encapsulation of the non-native substrate proteins and provides a physical environment optimized to promote and accelerate protein folding. GroES binds to the apical surface of the GroEL ring, thereby capping the opening of the GroEL channel. The protein is Co-chaperonin GroES of Desulfotalea psychrophila (strain LSv54 / DSM 12343).